The following is a 544-amino-acid chain: MSTSSLAFLKAKACAEIVAELIASENQNKVINLNALKMRISKKHQLSESPRLTDIIAAIPPDAYLKESLMRKLRAKPVRTASGIAVVAVMCKPHRCPHIAMTGNVCVYCPGGPDSDFEYSTQSYTGYEPTSMRAIRARYDPYEQARGRVEQLRSLGHTVDKVEYIIMGGTFMSLPESYRHTFIANLHNALSGATTEDLDEAVKFSEQSETKCVGITIETRPDYCLDQHLDEMLRYGCTRLEIGVQSVYEDVARDTNRGHTVKAVCETFQLAKDTGYKVVTHMMPDLPNVGMERDIFQFQEYFENPAFRTDGLKLYPTLVIRGTGLYELWKTGRYKNYTPNALVDLIARILALVPPWTRIYRIQRDIPMPLVSSGVETGNLRELALNRMRDLGTKCRDIRAREVGMQEVHHKIHPEQVELLRRDYTANGGWETFLSYEDPKQDILIGLLRLRQCSDKTYRPEFTSQPTSLVRELHVYGSAVPVHSRDPKKFQHQGFGTLLLEEAERIAKYEHGSKKISVISGVGVRKYYQKLGYTLDGPYMSKWL.

The Radical SAM core domain maps to Arg79–Pro369. Cys96, Cys106, and Cys109 together coordinate [4Fe-4S] cluster. Acetyl-CoA-binding positions include Lys161, Glu472–Val475, Phe495–Thr497, and Tyr528. The N-acetyltransferase domain occupies Thr393 to Leu544.

This sequence belongs to the ELP3 family. As to quaternary structure, component of the elongator complex. [4Fe-4S] cluster is required as a cofactor.

It localises to the cytoplasm. It carries out the reaction uridine(34) in tRNA + acetyl-CoA + S-adenosyl-L-methionine + H2O = 5-(carboxymethyl)uridine(34) in tRNA + 5'-deoxyadenosine + L-methionine + CoA + 2 H(+). Its pathway is tRNA modification; 5-methoxycarbonylmethyl-2-thiouridine-tRNA biosynthesis. Functionally, catalytic tRNA acetyltransferase subunit of the elongator complex which is required for multiple tRNA modifications, including mcm5U (5-methoxycarbonylmethyl uridine), mcm5s2U (5-methoxycarbonylmethyl-2-thiouridine), and ncm5U (5-carbamoylmethyl uridine). In the elongator complex, acts as a tRNA uridine(34) acetyltransferase, which mediates formation of carboxymethyluridine in the wobble base at position 34 in tRNAs. The protein is Elongator complex protein 3 of Schizosaccharomyces pombe (strain 972 / ATCC 24843) (Fission yeast).